We begin with the raw amino-acid sequence, 267 residues long: Indole-3-glycerol phosphate synthase (267 aa).

It belongs to the TrpC family.

It carries out the reaction 1-(2-carboxyphenylamino)-1-deoxy-D-ribulose 5-phosphate + H(+) = (1S,2R)-1-C-(indol-3-yl)glycerol 3-phosphate + CO2 + H2O. It participates in amino-acid biosynthesis; L-tryptophan biosynthesis; L-tryptophan from chorismate: step 4/5. The protein is Indole-3-glycerol phosphate synthase of Polynucleobacter asymbioticus (strain DSM 18221 / CIP 109841 / QLW-P1DMWA-1) (Polynucleobacter necessarius subsp. asymbioticus).